A 311-amino-acid chain; its full sequence is MSVVNNRVALTNLVSMEALTTEEVLGLINRGSEYKAGKVVISDHQKDLVANLFFENSTRTHKSFEVAEKKLGLTVLDFNADASAVNKGESLYDTVLTMSALGTDICVIRHPEDDYYKELVESPTITASIVNGGDGSGQHPSQCLLDLLTIYEEFGRFEGLKIAIAGDLTHSRVAKSNMQILKRLGAELYFYGPEEWYSEAFNAYGTYIAIDQIIKELDVLMLLRVQHERHDGHQSFSKEGYHQAFGLTQERYQQLKDSAIIMHPAPVNRDVEIADSLVEAPKARIVSQMANGVFVRMAIIEAILNGRNKNL.

Arginine 59 and threonine 60 together coordinate carbamoyl phosphate. Position 87 (lysine 87) interacts with L-aspartate. Carbamoyl phosphate is bound by residues arginine 109, histidine 139, and glutamine 142. Positions 172 and 224 each coordinate L-aspartate. Carbamoyl phosphate is bound by residues alanine 265 and proline 266.

This sequence belongs to the aspartate/ornithine carbamoyltransferase superfamily. ATCase family. Heterododecamer (2C3:3R2) of six catalytic PyrB chains organized as two trimers (C3), and six regulatory PyrI chains organized as three dimers (R2).

The catalysed reaction is carbamoyl phosphate + L-aspartate = N-carbamoyl-L-aspartate + phosphate + H(+). Its pathway is pyrimidine metabolism; UMP biosynthesis via de novo pathway; (S)-dihydroorotate from bicarbonate: step 2/3. In terms of biological role, catalyzes the condensation of carbamoyl phosphate and aspartate to form carbamoyl aspartate and inorganic phosphate, the committed step in the de novo pyrimidine nucleotide biosynthesis pathway. This chain is Aspartate carbamoyltransferase catalytic subunit, found in Streptococcus pyogenes serotype M18 (strain MGAS8232).